We begin with the raw amino-acid sequence, 232 residues long: Phosphoribosylformylglycinamidine synthase subunit PurQ (232 aa).

The 231-residue stretch at 2-232 (KIAIIQFGGT…SMADYITENF (231 aa)) folds into the Glutamine amidotransferase type-1 domain. The Nucleophile role is filled by C86. Residues H203 and E205 contribute to the active site.

Part of the FGAM synthase complex composed of 1 PurL, 1 PurQ and 2 PurS subunits.

The protein resides in the cytoplasm. The catalysed reaction is N(2)-formyl-N(1)-(5-phospho-beta-D-ribosyl)glycinamide + L-glutamine + ATP + H2O = 2-formamido-N(1)-(5-O-phospho-beta-D-ribosyl)acetamidine + L-glutamate + ADP + phosphate + H(+). It catalyses the reaction L-glutamine + H2O = L-glutamate + NH4(+). The protein operates within purine metabolism; IMP biosynthesis via de novo pathway; 5-amino-1-(5-phospho-D-ribosyl)imidazole from N(2)-formyl-N(1)-(5-phospho-D-ribosyl)glycinamide: step 1/2. Functionally, part of the phosphoribosylformylglycinamidine synthase complex involved in the purines biosynthetic pathway. Catalyzes the ATP-dependent conversion of formylglycinamide ribonucleotide (FGAR) and glutamine to yield formylglycinamidine ribonucleotide (FGAM) and glutamate. The FGAM synthase complex is composed of three subunits. PurQ produces an ammonia molecule by converting glutamine to glutamate. PurL transfers the ammonia molecule to FGAR to form FGAM in an ATP-dependent manner. PurS interacts with PurQ and PurL and is thought to assist in the transfer of the ammonia molecule from PurQ to PurL. This is Phosphoribosylformylglycinamidine synthase subunit PurQ from Methanosarcina acetivorans (strain ATCC 35395 / DSM 2834 / JCM 12185 / C2A).